The chain runs to 1193 residues: Sperm-associated antigen 5 (1193 aa).

The disordered stretch occupies residues 1–48 (MWRVKKLSLSLSPSPQTGKPSMRTPLRELTLQPGALTNSGKRSPACSS). Ser-12, Ser-14, Ser-43, Ser-62, and Ser-66 each carry phosphoserine. Residues 35–48 (ALTNSGKRSPACSS) show a composition bias toward polar residues. Residues 96-117 (ESDEQPLDPIPQISSTPKTSEE) form a disordered region. Thr-111 carries the post-translational modification Phosphothreonine; by GSK3-beta. Phosphoserine occurs at positions 135, 159, and 334. Thr-336 is modified (phosphothreonine). Phosphoserine occurs at positions 341, 353, and 362. Positions 390–405 (PSAPQEKSTNTSQTGL) are enriched in polar residues. Residues 390–416 (PSAPQEKSTNTSQTGLVGTKHSTSETE) form a disordered region. An interaction with KNSTRN region spans residues 482–850 (NKLQHLKESH…LKDTVENLTA (369 aa)). 2 coiled-coil regions span residues 545–608 (CCFD…SMRE) and 759–868 (QLTQ…EKTR). A Phosphothreonine; by GSK3-beta modification is found at Thr-937. Ser-974 bears the Phosphoserine; by GSK3-beta mark. Thr-978 is subject to Phosphothreonine; by GSK3-beta. Residues 979-1174 (ELQSLCSLLQ…VQHIYKTLLS (196 aa)) adopt a coiled-coil conformation.

In terms of assembly, homodimer, with a globular head domain and a long stalk. Homooligomer; the globular head domains associate, resulting in aster-like structures. Binds to microtubules in the mitotic spindle. Interacts with DCLRE1B/Apollo. Part of an astrin (SPAG5)-kinastrin (SKAP) complex containing KNSTRN, SPAG5, PLK1, DYNLL1 and SGO2. Interacts with KNSTRN. Interacts with RPTOR; this interaction competes with RPTOR binding to MTOR, resulting in decreased mTORC1 formation. Interacts with G3BP1. The complex formed with G3BP1 AND RPTOR is increased by oxidative stress. Interacts with OSBPL8, PCM1 and CDK5RAP2. Interacts (via C-terminus) with NUMA1 (via C-terminus); this interaction promotes the recruitment of SPAG5 to the microtubules at spindle poles in a dynein-dynactin-dependent manner. Interacts with DYNLL1. In terms of processing, phosphorylated by AURKA. In terms of tissue distribution, highly expressed in testis. Detected at low levels in placenta, liver, pancreas, thymus and colon.

Its subcellular location is the cytoplasm. The protein resides in the cytoskeleton. The protein localises to the spindle. It is found in the spindle pole. It localises to the chromosome. Its subcellular location is the centromere. The protein resides in the kinetochore. The protein localises to the midbody. It is found in the microtubule organizing center. It localises to the centrosome. Its subcellular location is the cytoplasmic granule. The protein resides in the centriolar satellite. Its function is as follows. Essential component of the mitotic spindle required for normal chromosome segregation and progression into anaphase. Required for chromosome alignment, normal timing of sister chromatid segregation, and maintenance of spindle pole architecture. In complex with SKAP, promotes stable microtubule-kinetochore attachments. May contribute to the regulation of separase activity. May regulate AURKA localization to mitotic spindle, but not to centrosomes and CCNB1 localization to both mitotic spindle and centrosomes. Involved in centriole duplication. Required for CDK5RAP2, CEP152, WDR62 and CEP63 centrosomal localization and promotes the centrosomal localization of CDK2. In non-mitotic cells, upon stress induction, inhibits mammalian target of rapamycin complex 1 (mTORC1) association and recruits the mTORC1 component RPTOR to stress granules (SGs), thereby preventing mTORC1 hyperactivation-induced apoptosis. May enhance GSK3B-mediated phosphorylation of other substrates, such as MAPT/TAU. The protein is Sperm-associated antigen 5 (SPAG5) of Homo sapiens (Human).